The following is a 161-amino-acid chain: Dihydrofolate reductase type 1 from Tn4003 (161 aa).

Residues 2-157 enclose the DHFR domain; it reads TLSIIVAHDK…IPHTFLHLVR (156 aa). 6–8 contacts substrate; the sequence is IVA. NADP(+) is bound by residues 7-8 and 15-20; these read VA and IGYQNQ. Asp28 lines the substrate pocket. Residue 44-47 participates in NADP(+) binding; sequence ARKT. Residue Arg58 participates in substrate binding. NADP(+)-binding positions include 63–66 and 93–98; these read LTNQ and FGGQTL. Thr112 is a binding site for substrate.

Belongs to the dihydrofolate reductase family.

It catalyses the reaction (6S)-5,6,7,8-tetrahydrofolate + NADP(+) = 7,8-dihydrofolate + NADPH + H(+). It participates in cofactor biosynthesis; tetrahydrofolate biosynthesis; 5,6,7,8-tetrahydrofolate from 7,8-dihydrofolate: step 1/1. Its function is as follows. Key enzyme in folate metabolism. Catalyzes an essential reaction for de novo glycine and purine synthesis, and for DNA precursor synthesis. The protein is Dihydrofolate reductase type 1 from Tn4003 (dfrA) of Staphylococcus aureus.